The chain runs to 359 residues: Golgi-resident adenosine 3',5'-bisphosphate 3'-phosphatase (359 aa).

M1 carries the post-translational modification N-acetylmethionine. Residues 1–12 (MAPMGIRLSPLG) are Cytoplasmic-facing. Residues 13-33 (VAVFCLLGLGVLYHLYSGFLA) traverse the membrane as a helical segment. Residues 34-359 (GRFSLFGLGG…LPDLEKTGHK (326 aa)) lie on the Lumenal side of the membrane. Positions 86 to 106 (ESNVLHEKSKGKTREGAEDKM) are disordered. The active-site Proton acceptor is D110. Positions 133, 174, 176, and 177 each coordinate Mg(2+). The active-site Proton acceptor is T179. AMP contacts are provided by S242 and H245. N259 carries an N-linked (GlcNAc...) asparagine glycan. 2 residues coordinate AMP: G268 and K272. D300 is a binding site for Mg(2+).

This sequence belongs to the inositol monophosphatase superfamily. Requires Mg(2+) as cofactor. Post-translationally, contains N-linked glycan resistant to endoglycosydase H.

The protein localises to the golgi apparatus. Its subcellular location is the trans-Golgi network membrane. It catalyses the reaction adenosine 3',5'-bisphosphate + H2O = AMP + phosphate. The protein operates within sulfur metabolism. Its activity is regulated as follows. Strongly inhibited by lithium. Its function is as follows. Exhibits 3'-nucleotidase activity toward adenosine 3',5'-bisphosphate (PAP), namely hydrolyzes adenosine 3',5'-bisphosphate into adenosine 5'-monophosphate (AMP) and a phosphate. May play a role in the formation of skeletal elements derived through endochondral ossification, possibly by clearing adenosine 3',5'-bisphosphate produced by Golgi sulfotransferases during glycosaminoglycan sulfation. Has no activity toward 3'-phosphoadenosine 5'-phosphosulfate (PAPS) or inositol phosphate (IP) substrates including I(1)P, I(1,4)P2, I(1,3,4)P3, I(1,4,5)P3 and I(1,3,4,5)P4. This is Golgi-resident adenosine 3',5'-bisphosphate 3'-phosphatase from Homo sapiens (Human).